Reading from the N-terminus, the 558-residue chain is Oxygen-dependent choline dehydrogenase (558 aa).

8-37 (DYIIIGAGSAGNVLATRLTEDSDVSVLLLE) is an FAD binding site. The Proton acceptor role is filled by His475.

Belongs to the GMC oxidoreductase family. It depends on FAD as a cofactor.

It carries out the reaction choline + A = betaine aldehyde + AH2. The enzyme catalyses betaine aldehyde + NAD(+) + H2O = glycine betaine + NADH + 2 H(+). It participates in amine and polyamine biosynthesis; betaine biosynthesis via choline pathway; betaine aldehyde from choline (cytochrome c reductase route): step 1/1. In terms of biological role, involved in the biosynthesis of the osmoprotectant glycine betaine. Catalyzes the oxidation of choline to betaine aldehyde and betaine aldehyde to glycine betaine at the same rate. The sequence is that of Oxygen-dependent choline dehydrogenase from Chromohalobacter salexigens (strain ATCC BAA-138 / DSM 3043 / CIP 106854 / NCIMB 13768 / 1H11).